Consider the following 252-residue polypeptide: Phosphoribosyl-ATP pyrophosphatase (252 aa).

The protein belongs to the PRA-PH family.

Its subcellular location is the cytoplasm. It catalyses the reaction 1-(5-phospho-beta-D-ribosyl)-ATP + H2O = 1-(5-phospho-beta-D-ribosyl)-5'-AMP + diphosphate + H(+). Its pathway is amino-acid biosynthesis; L-histidine biosynthesis; L-histidine from 5-phospho-alpha-D-ribose 1-diphosphate: step 2/9. This is Phosphoribosyl-ATP pyrophosphatase from Magnetococcus marinus (strain ATCC BAA-1437 / JCM 17883 / MC-1).